The primary structure comprises 1368 residues: DNA-directed RNA polymerase subunit beta (1368 aa).

The protein belongs to the RNA polymerase beta chain family. The RNAP catalytic core consists of 2 alpha, 1 beta, 1 beta' and 1 omega subunit. When a sigma factor is associated with the core the holoenzyme is formed, which can initiate transcription.

It carries out the reaction RNA(n) + a ribonucleoside 5'-triphosphate = RNA(n+1) + diphosphate. In terms of biological role, DNA-dependent RNA polymerase catalyzes the transcription of DNA into RNA using the four ribonucleoside triphosphates as substrates. The polypeptide is DNA-directed RNA polymerase subunit beta (Syntrophotalea carbinolica (strain DSM 2380 / NBRC 103641 / GraBd1) (Pelobacter carbinolicus)).